An 85-amino-acid chain; its full sequence is Putative N.vectensis toxin 1 9 (85 aa).

The first 20 residues, 1 to 20, serve as a signal peptide directing secretion; it reads MASFKIVIVCLALLVAVASA. Residues 21 to 36 constitute a propeptide that is removed on maturation; sequence RRRDMMSDDELDYHFS. 3 disulfides stabilise this stretch: cysteine 42–cysteine 82, cysteine 44–cysteine 72, and cysteine 65–cysteine 83.

It belongs to the sea anemone sodium channel inhibitory toxin family. Type II subfamily. Expressed in ectodermal glands and in clumps outside of the extodermal layer. Is not expressed in nematocytes. In adult female tissues, shows similar expression levels in mesenteries (gametes-producing tissue), tentacles, pharynx and physa.

It localises to the secreted. Functionally, binds to site 3 of voltage-gated sodium channels and inhibits the inactivation process. Is highly active on DmNav1/TipE (drosophila) and is only extremely weakly active on rat Nav1.4-beta-1/SCN4A-SCN1B, and on human Nav1.5-beta-1/SCN5A-beta-1. This reveals high specificity for arthropod over mammalian channels. In vivo, when released into the medium, this recombinant toxin induces impaired swimming, paralysis and death of the crustacean A.nauplii within several hours. Also causes paralysis of cherry shrimps immediately after injection at very low doses. Its effect on zebrafish (D.rerio) larvae is also rapid, since it induces tail twitching accompanied by impaired swimming after 20 minutes and complete paralysis within 45 minutes. It has also been observed to cause death of zebrafish larvae within 1 hour. The protein is Putative N.vectensis toxin 1 9 of Nematostella vectensis (Starlet sea anemone).